The chain runs to 361 residues: MAGNSIGQIFRVTTFGESHGVALGCIVDGVPPGIPLTEADLQHDLDRRRPGTSRYTTQRREPDQVRILSGVFEGVTTGTSIGLIIENTDQRSQDYGAIKDVFRPGHADYTYEQKYGVRDYRGGGRSSARETAMRVAAGAIAKKYLQQKFGVQVRGYLAQIGDVVCELKDWEQVEQNPFFCPDPDKLEALDELMRALKKEGDSIGAKVSVVAENVPVGLGEPVFDRLDADLAHALMSINAVKGVEIGDGFSVVTKRGSENRDEITPEGFQSNHAGGILGGISSGQAVIAHLALKPTSSIMVPGRTINRQGEAVEMVTRGRHDPCVGIRAVPIAEAMMAIVLMDHLLRQRAQNGDVVSNVPRW.

The interval 37–59 (TEADLQHDLDRRRPGTSRYTTQR) is disordered. The span at 40-49 (DLQHDLDRRR) shows a compositional bias: basic and acidic residues. NADP(+)-binding residues include Arg-48 and Arg-54. FMN-binding positions include 125 to 127 (RSS), 238 to 239 (NA), Gly-278, 293 to 297 (KPTSS), and Arg-319.

Belongs to the chorismate synthase family. Homotetramer. It depends on FMNH2 as a cofactor.

It carries out the reaction 5-O-(1-carboxyvinyl)-3-phosphoshikimate = chorismate + phosphate. It functions in the pathway metabolic intermediate biosynthesis; chorismate biosynthesis; chorismate from D-erythrose 4-phosphate and phosphoenolpyruvate: step 7/7. Functionally, catalyzes the anti-1,4-elimination of the C-3 phosphate and the C-6 proR hydrogen from 5-enolpyruvylshikimate-3-phosphate (EPSP) to yield chorismate, which is the branch point compound that serves as the starting substrate for the three terminal pathways of aromatic amino acid biosynthesis. This reaction introduces a second double bond into the aromatic ring system. The sequence is that of Chorismate synthase from Serratia proteamaculans (strain 568).